Here is a 156-residue protein sequence, read N- to C-terminus: Small ribosomal subunit protein uS7 (156 aa).

It belongs to the universal ribosomal protein uS7 family. As to quaternary structure, part of the 30S ribosomal subunit. Contacts proteins S9 and S11.

Its function is as follows. One of the primary rRNA binding proteins, it binds directly to 16S rRNA where it nucleates assembly of the head domain of the 30S subunit. Is located at the subunit interface close to the decoding center, probably blocks exit of the E-site tRNA. This chain is Small ribosomal subunit protein uS7, found in Allorhizobium ampelinum (strain ATCC BAA-846 / DSM 112012 / S4) (Agrobacterium vitis (strain S4)).